Consider the following 1158-residue polypeptide: MINVITGRQVDNLQNEIIDQAVKSYYQDKTHDVFIIVPNHIKFTTEVRALSKLSVLTNKKQVAVNKLHILSFSRLAWYFLKDEAIKLPQILDDAASVMLLEQIVKDHQDELKLFQNKNQITSGALRQMYEAILSVRAGNIDLENIDNEKLNEETSYKVHDLQIIYDDFIDRLSEKFATKDEMQLLLNEFLAKSDSLSTMVFYFSDFSHFSLQELTSVRLISKKAKNTTLAFKTKIGKIDSKAEQGDYDYVVQRTIRQLEHFWQNQQLNYQTTEFPLTKTNPSSLLNGVWTKTNGFDESLSKFLQPVKADSRYAEAYFVARTIYQQVALNNYRYQDFLVLAPNLNEYETYLTPILRQNNIPFFNDLQKEMKYHPLVVAVENLQQIFKRGFQTDNVIALMKTQLFIPEWYKSVARYQNDVDLLENFVLAHGIKGELWKKPLKSFVDAEVIALDKSEQEVEELDRLRKYFISILSEFFEDIETEKDPQAGVTIFWNFLIKNRVAKRLEAWRKEANDAGDLQLAQQPEQVWSTLNDLLKDYLLVAKEFSLEQFFDLLISGFSEANFSQIPSTLDAVNISEMGMVQGQGYKQVFIIGATSSNLPQIEKIPGFFSSENLEQLNDGNNASGYLEDQQKINNLDQNYQFGNALSLASDKIYISYPVINTANEQLEPSIFYKQLLRLTQANEFSQHDLPSSAGDLLTFMTNPEASLGYLTYLKGKQEVNVDSILELTEQEIGEVAQNVLEGSNFKNVPENLPPKLAQELYGDRIETSVSQLETYYQNSFEYFLNYGLHLKKRFENELDVIQAGNYYHETFDYLVKKIKEKNLDFADLTDSKLNQLLIEVREELKEKGRYRQLLNDPFNKYLFHKLDQTTSNVAHYWHSNVNKTTFRPQYSELSFGKNQKVTGLSYSWKDENNQKKIVDLRGKMDRVDLAKVNDRVLGEVIDYKSSAKKFDLGLFANGISMQMISYLEVLKKNNKFFAQGKNLDVLGAFYQNITSSLERLSSDKMILSNYQIKDLLKESTKKLMYNGILVADEEILDLIEPGMEKDRATSEIYSSIKRKVNGDISWPRNQSFTPDQLELLLAYNSYLIKNAGSEILSGKIKLDPYTYGQQSSLTYSDFKDIFFFDAMLKENNYHKIKAIDKKTLLNLIKEKLDLDGDE.

This sequence belongs to the helicase family. AddB/RexB type 2 subfamily. In terms of assembly, heterodimer of AddA and RexB. Mg(2+) is required as a cofactor.

Its function is as follows. The heterodimer acts as both an ATP-dependent DNA helicase and an ATP-dependent, dual-direction single-stranded exonuclease. Recognizes the chi site generating a DNA molecule suitable for the initiation of homologous recombination. This subunit has 5' -&gt; 3' nuclease activity but not helicase activity. The chain is ATP-dependent helicase/deoxyribonuclease subunit B from Lactobacillus gasseri (strain ATCC 33323 / DSM 20243 / BCRC 14619 / CIP 102991 / JCM 1131 / KCTC 3163 / NCIMB 11718 / NCTC 13722 / AM63).